Reading from the N-terminus, the 274-residue chain is D-aminopeptidase (274 aa).

The Zn(2+) site is built by aspartate 8, glutamate 10, histidine 60, and histidine 104. Histidine 115 acts as the Nucleophile in catalysis. A Zn(2+)-binding site is contributed by glutamate 133.

This sequence belongs to the peptidase M55 family. As to quaternary structure, homodecamer. A 20 Angstroms wide channel runs through the complex, giving access to a central chamber holding the active sites. Zn(2+) is required as a cofactor.

Functionally, hydrolyzes N-terminal residues in D-amino acid containing peptides. Among the tested substrates, the highest activities are with D-Ala-D-Ala and D-Ala-Gly-Gly. The physiological role is not clear. In Bacillus subtilis (strain 168), this protein is D-aminopeptidase (dppA).